The primary structure comprises 216 residues: 3-isopropylmalate dehydratase small subunit (216 aa).

It belongs to the LeuD family. LeuD type 1 subfamily. In terms of assembly, heterodimer of LeuC and LeuD.

The enzyme catalyses (2R,3S)-3-isopropylmalate = (2S)-2-isopropylmalate. Its pathway is amino-acid biosynthesis; L-leucine biosynthesis; L-leucine from 3-methyl-2-oxobutanoate: step 2/4. Its function is as follows. Catalyzes the isomerization between 2-isopropylmalate and 3-isopropylmalate, via the formation of 2-isopropylmaleate. This Albidiferax ferrireducens (strain ATCC BAA-621 / DSM 15236 / T118) (Rhodoferax ferrireducens) protein is 3-isopropylmalate dehydratase small subunit.